We begin with the raw amino-acid sequence, 468 residues long: Probable ubiquitin carboxyl-terminal hydrolase R319 (468 aa).

The region spanning 42 to 462 is the USP domain; that stretch reads TGIMNLGNTC…NAYILFYIRS (421 aa). Cys-51 serves as the catalytic Nucleophile. His-420 serves as the catalytic Proton acceptor.

It belongs to the peptidase C19 family.

The catalysed reaction is Thiol-dependent hydrolysis of ester, thioester, amide, peptide and isopeptide bonds formed by the C-terminal Gly of ubiquitin (a 76-residue protein attached to proteins as an intracellular targeting signal).. This chain is Probable ubiquitin carboxyl-terminal hydrolase R319, found in Acanthamoeba polyphaga (Amoeba).